Reading from the N-terminus, the 201-residue chain is Imidazoleglycerol-phosphate dehydratase (201 aa).

The protein belongs to the imidazoleglycerol-phosphate dehydratase family.

The protein localises to the cytoplasm. It carries out the reaction D-erythro-1-(imidazol-4-yl)glycerol 3-phosphate = 3-(imidazol-4-yl)-2-oxopropyl phosphate + H2O. The protein operates within amino-acid biosynthesis; L-histidine biosynthesis; L-histidine from 5-phospho-alpha-D-ribose 1-diphosphate: step 6/9. The polypeptide is Imidazoleglycerol-phosphate dehydratase (Methanopyrus kandleri (strain AV19 / DSM 6324 / JCM 9639 / NBRC 100938)).